The following is a 533-amino-acid chain: Amidophosphoribosyltransferase (533 aa).

Catalysis depends on Cys-2, which acts as the Nucleophile. A Glutamine amidotransferase type-2 domain is found at 2–238; sequence CGILALMLAD…PGECVFIRRS (237 aa). Mg(2+) is bound by residues Asp-383 and Asp-384. Ser-506 is modified (phosphoserine).

It in the C-terminal section; belongs to the purine/pyrimidine phosphoribosyltransferase family. Mg(2+) serves as cofactor.

The enzyme catalyses 5-phospho-beta-D-ribosylamine + L-glutamate + diphosphate = 5-phospho-alpha-D-ribose 1-diphosphate + L-glutamine + H2O. It participates in purine metabolism; IMP biosynthesis via de novo pathway; N(1)-(5-phospho-D-ribosyl)glycinamide from 5-phospho-alpha-D-ribose 1-diphosphate: step 1/2. The protein is Amidophosphoribosyltransferase (ade4) of Schizosaccharomyces pombe (strain 972 / ATCC 24843) (Fission yeast).